The sequence spans 251 residues: Tryptophan synthase alpha chain (251 aa).

Residues Glu46 and Asp57 each act as proton acceptor in the active site.

The protein belongs to the TrpA family. Tetramer of two alpha and two beta chains.

The catalysed reaction is (1S,2R)-1-C-(indol-3-yl)glycerol 3-phosphate + L-serine = D-glyceraldehyde 3-phosphate + L-tryptophan + H2O. Its pathway is amino-acid biosynthesis; L-tryptophan biosynthesis; L-tryptophan from chorismate: step 5/5. Functionally, the alpha subunit is responsible for the aldol cleavage of indoleglycerol phosphate to indole and glyceraldehyde 3-phosphate. The polypeptide is Tryptophan synthase alpha chain (Karelsulcia muelleri (strain GWSS) (Sulcia muelleri)).